The following is a 363-amino-acid chain: Cyanuric acid amidohydrolase (363 aa).

The segment at 1–103 is RU A; it reads MKTRVTRLTV…LVFEVDDSAP (103 aa). Substrate-binding positions include Arg-51 and 82 to 83; that span reads SG. Residues 111–247 form an RU B region; it reads GLAAGVAFTR…NEVLVLGNAP (137 aa). The active site involves Lys-161. Substrate is bound by residues Arg-193 and 230–231; that span reads SA. Residue Ser-230 is the Nucleophile of the active site. Residues 253 to 363 are RU C; that stretch reads YRIGHAVMED…GGPLALIVRS (111 aa). A Mg(2+)-binding site is contributed by Glu-297. Substrate contacts are provided by residues Arg-324 and 343-344; that span reads SG. 5 residues coordinate Mg(2+): Ala-346, Gln-349, Gly-350, Pro-351, and Gly-354.

This sequence belongs to the cyclic amide hydrolase (CyAH) family. Homotetramer.

It catalyses the reaction cyanurate + H2O = 1-carboxybiuret + H(+). The protein operates within xenobiotic degradation; atrazine degradation; biuret from cyanurate: step 1/1. Its activity is regulated as follows. Inhibited by barbituric acid. Functionally, responsible for the hydrolysis of cyanuric acid, an intermediate formed during catabolism of s-triazine based compounds in herbicides such as atrazine and polymers such as melamine. Catalyzes the hydrolytic opening of the s-triazine ring of cyanuric acid (2,4,6-trihydroxy-s-triazine) to yield carbon dioxide and carboxybiuret, which spontaneously decarboxylates to biuret. The polypeptide is Cyanuric acid amidohydrolase (Ectopseudomonas oleovorans (strain CECT 5344) (Pseudomonas pseudoalcaligenes)).